The following is a 531-amino-acid chain: RNA-binding protein RO60 (531 aa).

In terms of domain architecture, TROVE spans 24-360; the sequence is VRNNAGGFVY…AFGNVQPANT (337 aa). Residues 128 to 274 are RNA-binding; it reads RTGTMLLHFL…TNGLTWLLRN (147 aa). Residues 352–531 are VWFA-like domain; it reads FGNVQPANTR…VMTAFARGEV (180 aa). 3 residues coordinate a divalent metal cation: serine 369, serine 371, and threonine 438.

It belongs to the Ro 60 kDa family. Forms oligomers upon binding DrY RNA, The multimers are of an average size of 700 kDa and are composed of around 12 molecules of Rsr-DrY RNA.

It is found in the cytoplasm. Binds to several small RNAs that accumulate during recovery from UV irradiation. Contributes to the resistance of D.radiodurans to ultraviolet irradiation. The protein is RNA-binding protein RO60 of Deinococcus radiodurans (strain ATCC 13939 / DSM 20539 / JCM 16871 / CCUG 27074 / LMG 4051 / NBRC 15346 / NCIMB 9279 / VKM B-1422 / R1).